The following is a 62-amino-acid chain: Toxin Tb2 (62 aa).

In terms of domain architecture, LCN-type CS-alpha/beta spans 1 to 62; it reads KEGYAMDHEG…KVWDYATNKC (62 aa). 4 disulfides stabilise this stretch: Cys11/Cys62, Cys15/Cys38, Cys23/Cys43, and Cys27/Cys45. Cys62 is modified (cysteine amide).

The protein belongs to the long (4 C-C) scorpion toxin superfamily. Sodium channel inhibitor family. Beta subfamily. In terms of tissue distribution, expressed by the venom gland.

It is found in the secreted. In terms of biological role, beta toxins bind voltage-independently at site-4 of sodium channels (Nav) and shift the voltage of activation toward more negative potentials thereby affecting sodium channel activation and promoting spontaneous and repetitive firing. This toxin is active on mammals. The protein is Toxin Tb2 of Tityus bahiensis (Brazilian scorpion).